The primary structure comprises 228 residues: Cytochrome c oxidase subunit 2 (228 aa).

Over 1-26 (MSTWANLGLQDSASPLMEQLIFFHDH) the chain is Mitochondrial intermembrane. A helical membrane pass occupies residues 27–48 (ALLILVMITVLVGYLMFMLFFN). At 49–62 (NYVNRFLLHGQLIE) the chain is on the mitochondrial matrix side. Residues 63 to 82 (MIWTILPAIILLFIALPSLR) traverse the membrane as a helical segment. At 83–228 (LLYLLDEINE…FIKWISSNNS (146 aa)) the chain is on the mitochondrial intermembrane side. H161, C196, E198, C200, H204, and M207 together coordinate Cu cation. Residue E198 coordinates Mg(2+).

It belongs to the cytochrome c oxidase subunit 2 family. In terms of assembly, component of the cytochrome c oxidase (complex IV, CIV), a multisubunit enzyme composed of a catalytic core of 3 subunits and several supernumerary subunits. The complex exists as a monomer or a dimer and forms supercomplexes (SCs) in the inner mitochondrial membrane with ubiquinol-cytochrome c oxidoreductase (cytochrome b-c1 complex, complex III, CIII). Requires Cu cation as cofactor.

The protein localises to the mitochondrion inner membrane. The enzyme catalyses 4 Fe(II)-[cytochrome c] + O2 + 8 H(+)(in) = 4 Fe(III)-[cytochrome c] + 2 H2O + 4 H(+)(out). In terms of biological role, component of the cytochrome c oxidase, the last enzyme in the mitochondrial electron transport chain which drives oxidative phosphorylation. The respiratory chain contains 3 multisubunit complexes succinate dehydrogenase (complex II, CII), ubiquinol-cytochrome c oxidoreductase (cytochrome b-c1 complex, complex III, CIII) and cytochrome c oxidase (complex IV, CIV), that cooperate to transfer electrons derived from NADH and succinate to molecular oxygen, creating an electrochemical gradient over the inner membrane that drives transmembrane transport and the ATP synthase. Cytochrome c oxidase is the component of the respiratory chain that catalyzes the reduction of oxygen to water. Electrons originating from reduced cytochrome c in the intermembrane space (IMS) are transferred via the dinuclear copper A center (CU(A)) of subunit 2 and heme A of subunit 1 to the active site in subunit 1, a binuclear center (BNC) formed by heme A3 and copper B (CU(B)). The BNC reduces molecular oxygen to 2 water molecules using 4 electrons from cytochrome c in the IMS and 4 protons from the mitochondrial matrix. This Drosophila simulans (Fruit fly) protein is Cytochrome c oxidase subunit 2 (mt:CoII).